The sequence spans 443 residues: Protein translocase subunit SecY (443 aa).

10 consecutive transmembrane segments (helical) span residues 24–44 (LFVI…IPGI), 77–97 (IFAL…LLTV), 125–145 (LVLA…MPGM), 154–174 (FAFY…LMWL), 183–203 (IGNG…PPAI), 217–237 (FLVL…VVFV), 274–294 (VIPA…ASWF), 317–337 (YVLL…ALVF), 370–390 (MTRL…IPEF), and 397–417 (VPFY…MDFM).

The protein belongs to the SecY/SEC61-alpha family. Component of the Sec protein translocase complex. Heterotrimer consisting of SecY, SecE and SecG subunits. The heterotrimers can form oligomers, although 1 heterotrimer is thought to be able to translocate proteins. Interacts with the ribosome. Interacts with SecDF, and other proteins may be involved. Interacts with SecA.

Its subcellular location is the cell inner membrane. Functionally, the central subunit of the protein translocation channel SecYEG. Consists of two halves formed by TMs 1-5 and 6-10. These two domains form a lateral gate at the front which open onto the bilayer between TMs 2 and 7, and are clamped together by SecE at the back. The channel is closed by both a pore ring composed of hydrophobic SecY resides and a short helix (helix 2A) on the extracellular side of the membrane which forms a plug. The plug probably moves laterally to allow the channel to open. The ring and the pore may move independently. In Escherichia coli O157:H7, this protein is Protein translocase subunit SecY.